Reading from the N-terminus, the 218-residue chain is Cytidylate kinase (218 aa).

10-18 (GPAGSGKST) provides a ligand contact to ATP.

The protein belongs to the cytidylate kinase family. Type 1 subfamily.

The protein resides in the cytoplasm. The catalysed reaction is CMP + ATP = CDP + ADP. It carries out the reaction dCMP + ATP = dCDP + ADP. In Fusobacterium nucleatum subsp. nucleatum (strain ATCC 25586 / DSM 15643 / BCRC 10681 / CIP 101130 / JCM 8532 / KCTC 2640 / LMG 13131 / VPI 4355), this protein is Cytidylate kinase.